Here is a 503-residue protein sequence, read N- to C-terminus: Glycosyltransferase family 92 protein ZK381.2 (503 aa).

The helical transmembrane segment at 7 to 27 (YKPCLLIILIFNSVILLFILI) threads the bilayer. The GT92 domain occupies 156-441 (KPVIICISPQ…FKCYFDSFYK (286 aa)).

Belongs to the glycosyltransferase 92 family.

Its subcellular location is the membrane. In Caenorhabditis elegans, this protein is Glycosyltransferase family 92 protein ZK381.2.